We begin with the raw amino-acid sequence, 369 residues long: Peptide chain release factor 2 (369 aa).

An N5-methylglutamine modification is found at Q249.

The protein belongs to the prokaryotic/mitochondrial release factor family. Methylated by PrmC. Methylation increases the termination efficiency of RF2.

The protein localises to the cytoplasm. Functionally, peptide chain release factor 2 directs the termination of translation in response to the peptide chain termination codons UGA and UAA. The sequence is that of Peptide chain release factor 2 from Corynebacterium diphtheriae (strain ATCC 700971 / NCTC 13129 / Biotype gravis).